A 334-amino-acid chain; its full sequence is Probable 2-ketogluconate reductase (334 aa).

Residues 164-165 (RI), 244-246 (AGR), and aspartate 270 contribute to the NAD(+) site. Arginine 246 is an active-site residue. The active site involves glutamate 275. Histidine 294 functions as the Proton donor in the catalytic mechanism. An NAD(+)-binding site is contributed by 294–297 (HIGT).

Belongs to the D-isomer specific 2-hydroxyacid dehydrogenase family.

It localises to the cytoplasm. It catalyses the reaction D-gluconate + NADP(+) = 2-dehydro-D-gluconate + NADPH + H(+). Catalyzes the NADPH-dependent reduction of 2,5-diketo-D-gluconate (25DKG) to 5-keto-D-gluconate (5KDG), 2-keto-D-gluconate (2KDG) to D-gluconate, and 2-keto-L-gulonate (2KLG) to L-idonate (IA). The polypeptide is Probable 2-ketogluconate reductase (tkrA) (Dictyostelium discoideum (Social amoeba)).